Here is a 58-residue protein sequence, read N- to C-terminus: UPF0339 protein Msl4696 (58 aa).

This sequence belongs to the UPF0339 family.

The protein is UPF0339 protein Msl4696 of Mesorhizobium japonicum (strain LMG 29417 / CECT 9101 / MAFF 303099) (Mesorhizobium loti (strain MAFF 303099)).